Reading from the N-terminus, the 420-residue chain is Pyridinium-3,5-bisthiocarboxylic acid mononucleotide nickel insertion protein (420 aa).

It belongs to the LarC family.

The catalysed reaction is Ni(II)-pyridinium-3,5-bisthiocarboxylate mononucleotide = pyridinium-3,5-bisthiocarboxylate mononucleotide + Ni(2+). Involved in the biosynthesis of a nickel-pincer cofactor ((SCS)Ni(II) pincer complex). Binds Ni(2+), and functions in nickel delivery to pyridinium-3,5-bisthiocarboxylic acid mononucleotide (P2TMN), to form the mature cofactor. Is required for the activation of the lactate racemase LarA. May also be involved in the activation of other nickel-pincer cofactor-dependent enzymes. This chain is Pyridinium-3,5-bisthiocarboxylic acid mononucleotide nickel insertion protein, found in Lactiplantibacillus plantarum (strain ATCC BAA-793 / NCIMB 8826 / WCFS1) (Lactobacillus plantarum).